The following is a 185-amino-acid chain: Ribosome-recycling factor (185 aa).

It belongs to the RRF family.

It localises to the cytoplasm. Functionally, responsible for the release of ribosomes from messenger RNA at the termination of protein biosynthesis. May increase the efficiency of translation by recycling ribosomes from one round of translation to another. The sequence is that of Ribosome-recycling factor from Zymomonas mobilis subsp. mobilis (strain ATCC 31821 / ZM4 / CP4).